A 100-amino-acid chain; its full sequence is MKQLIFLLICLLSLLQYRLWLGDNNLSEYVLLQTQIAGQEQSNGKLVARNQILKEEIIDLKRGTEAIEERARNELGMVKEGETFYRVVGSELRERNPFNR.

Topologically, residues 1 to 3 (MKQ) are cytoplasmic. The helical transmembrane segment at 4–21 (LIFLLICLLSLLQYRLWL) threads the bilayer. At 22–100 (GDNNLSEYVL…ELRERNPFNR (79 aa)) the chain is on the periplasmic side. Positions 49-73 (RNQILKEEIIDLKRGTEAIEERARN) form a coiled coil.

This sequence belongs to the FtsB family. In terms of assembly, part of a complex composed of FtsB, FtsL and FtsQ.

It is found in the cell inner membrane. In terms of biological role, essential cell division protein. May link together the upstream cell division proteins, which are predominantly cytoplasmic, with the downstream cell division proteins, which are predominantly periplasmic. The polypeptide is Cell division protein FtsB (Shewanella frigidimarina (strain NCIMB 400)).